Consider the following 598-residue polypeptide: MEPVSTGAEAGMEGAGGDPYRRPARRTQWLLSALAHHYGLDRGVENEIVVLATGLDQYLQEVFHHLDCRGAGRLPRADFRALCAVLGLRAEGATTAGQAAGDGNSRDVTPGDAAAELATDGDSDTDEEARLALRAEPPELTFRQFHARLCGYFGTRAGPRLPRGALSEHIETQIRLRRPRRRRRPPCAPGPDSGPDCERVARLEEENSSLRELVEDLRAALQSSDARCLALQVGLWKSQASTHEMGHGGPEAAVRELRQAQGALAAAEARAGRLRRGQAEVRRRAEEARQVVLRSLHRVRELEALAQQVPGLQRWVRRLEAELQRYRSEDSQLPTPQLANPEPGDKSNEPEDAGTRDPDPTPEGAWQSDSSSGSRALDEVDEQLFRSVEGQAASDEEEVEEERWQEEKKTPAAEAKTLLARLSSCRGRCDDQTAEKLMTYFGHFGGANHAHTLGELEACIAMLVEQLRTQGCGGRTLGTSEEEAELQQKVEENEHLRLELQMVETERVRLSLLEEKLVDVLQLLQRLRDLNISKRALGKILLSTLDAFRDPTHEGRPSPAAILDALHQALAACQLLRRQPSAPASAAAALTNPLLVSC.

Positions 1–22 (MEPVSTGAEAGMEGAGGDPYRR) are disordered. The EF-hand domain occupies 54–89 (GLDQYLQEVFHHLDCRGAGRLPRADFRALCAVLGLR). Disordered stretches follow at residues 96–127 (AGQA…DTDE), 175–198 (RLRR…PDCE), and 326–411 (YRSE…KKTP). Basic residues predominate over residues 175–185 (RLRRPRRRRRP). A coiled-coil region spans residues 196-303 (DCERVARLEE…RSLHRVRELE (108 aa)). Basic and acidic residues predominate over residues 343–359 (PGDKSNEPEDAGTRDPD). A compositionally biased stretch (acidic residues) spans 394-404 (SDEEEVEEERW). The stretch at 479–533 (TSEEEAELQQKVEENEHLRLELQMVETERVRLSLLEEKLVDVLQLLQRLRDLNIS) forms a coiled coil.

This chain is EF-hand and coiled-coil domain-containing protein 1 (EFCC1), found in Homo sapiens (Human).